The chain runs to 196 residues: Probable nicotinate-nucleotide adenylyltransferase (196 aa).

This sequence belongs to the NadD family.

It catalyses the reaction nicotinate beta-D-ribonucleotide + ATP + H(+) = deamido-NAD(+) + diphosphate. It participates in cofactor biosynthesis; NAD(+) biosynthesis; deamido-NAD(+) from nicotinate D-ribonucleotide: step 1/1. In terms of biological role, catalyzes the reversible adenylation of nicotinate mononucleotide (NaMN) to nicotinic acid adenine dinucleotide (NaAD). This is Probable nicotinate-nucleotide adenylyltransferase from Thermotoga petrophila (strain ATCC BAA-488 / DSM 13995 / JCM 10881 / RKU-1).